The primary structure comprises 173 residues: Transcription factor E (173 aa).

An HTH TFE/IIEalpha-type domain is found at Asp3–Ile86.

This sequence belongs to the TFE family. In terms of assembly, monomer. Interaction with RNA polymerase subunits RpoF and RpoE is necessary for Tfe stimulatory transcription activity. Able to interact with Tbp and RNA polymerase in the absence of DNA promoter. Interacts both with the preinitiation and elongation complexes.

Functionally, transcription factor that plays a role in the activation of archaeal genes transcribed by RNA polymerase. Facilitates transcription initiation by enhancing TATA-box recognition by TATA-box-binding protein (Tbp), and transcription factor B (Tfb) and RNA polymerase recruitment. Not absolutely required for transcription in vitro, but particularly important in cases where Tbp or Tfb function is not optimal. It dynamically alters the nucleic acid-binding properties of RNA polymerases by stabilizing the initiation complex and destabilizing elongation complexes. Seems to translocate with the RNA polymerase following initiation and acts by binding to the non template strand of the transcription bubble in elongation complexes. This chain is Transcription factor E, found in Methanobrevibacter smithii (strain ATCC 35061 / DSM 861 / OCM 144 / PS).